Here is a 100-residue protein sequence, read N- to C-terminus: Large ribosomal subunit protein uL23 (100 aa).

It belongs to the universal ribosomal protein uL23 family. In terms of assembly, part of the 50S ribosomal subunit. Contacts protein L29, and trigger factor when it is bound to the ribosome.

In terms of biological role, one of the early assembly proteins it binds 23S rRNA. One of the proteins that surrounds the polypeptide exit tunnel on the outside of the ribosome. Forms the main docking site for trigger factor binding to the ribosome. This is Large ribosomal subunit protein uL23 from Prochlorococcus marinus subsp. pastoris (strain CCMP1986 / NIES-2087 / MED4).